We begin with the raw amino-acid sequence, 1033 residues long: DNA polymerase I A, chloroplastic (1033 aa).

Residues 1-11 (MAVAPPLPPAP) show a composition bias toward pro residues. Disordered regions lie at residues 1 to 32 (MAVAPPLPPAPARQLRRWKGSSPRPPPWLSSP) and 104 to 142 (TNGTTPLRVGNLRHDPSEDIRSSNYPSLYNQRERGPSNS). Residues 1–55 (MAVAPPLPPAPARQLRRWKGSSPRPPPWLSSPFRRTRYLSRPAFAAGGRQDYSPS) constitute a chloroplast transit peptide. Positions 115-124 (LRHDPSEDIR) are enriched in basic and acidic residues. The span at 125–142 (SSNYPSLYNQRERGPSNS) shows a compositional bias: polar residues. The 3'-5' exonuclease domain maps to 321 to 482 (FGNGKTCIWV…LYESLKNKLE (162 aa)). The polymerase stretch occupies residues 696-1030 (CHAIAALCEV…VDAKYAKSWY (335 aa)).

Belongs to the DNA polymerase type-A family. In terms of tissue distribution, expressed in shoot apical meristem, root apical meristem, leaf primordia and the marginal meristem.

The protein localises to the plastid. It localises to the chloroplast. It catalyses the reaction DNA(n) + a 2'-deoxyribonucleoside 5'-triphosphate = DNA(n+1) + diphosphate. With respect to regulation, inhibited by dideoxythymidine-triphosphate (ddTTP), but not by aphidicolin and N-ethylmaleimide. Functionally, in addition to polymerase activity, this DNA polymerase exhibits 5'-3' exonuclease activity. May be required for DNA replication and accumulation in plastids. The chain is DNA polymerase I A, chloroplastic from Oryza sativa subsp. japonica (Rice).